The primary structure comprises 142 residues: Prefoldin subunit alpha 1 (142 aa).

It belongs to the prefoldin subunit alpha family. In terms of assembly, heterohexamer of two alpha and four beta subunits.

Its subcellular location is the cytoplasm. Its function is as follows. Molecular chaperone capable of stabilizing a range of proteins. Seems to fulfill an ATP-independent, HSP70-like function in archaeal de novo protein folding. This chain is Prefoldin subunit alpha 1 (pfdA1), found in Methanocaldococcus jannaschii (strain ATCC 43067 / DSM 2661 / JAL-1 / JCM 10045 / NBRC 100440) (Methanococcus jannaschii).